Reading from the N-terminus, the 311-residue chain is Pyrimidine-specific ribonucleoside hydrolase RihA (311 aa).

Histidine 240 is an active-site residue.

Belongs to the IUNH family. RihA subfamily.

Its function is as follows. Hydrolyzes with equal efficiency cytidine or uridine to ribose and cytosine or uracil, respectively. This is Pyrimidine-specific ribonucleoside hydrolase RihA from Escherichia coli (strain SMS-3-5 / SECEC).